Consider the following 366-residue polypeptide: RNA 3'-terminal phosphate cyclase (366 aa).

ATP is bound by residues glutamine 104, proline 131, tyrosine 294, aspartate 297, glutamine 298, and histidine 320. Catalysis depends on histidine 320, which acts as the Tele-AMP-histidine intermediate.

The protein belongs to the RNA 3'-terminal cyclase family. Type 1 subfamily.

The protein resides in the nucleus. Its subcellular location is the nucleoplasm. It carries out the reaction a 3'-end 3'-phospho-ribonucleotide-RNA + ATP = a 3'-end 2',3'-cyclophospho-ribonucleotide-RNA + AMP + diphosphate. Functionally, catalyzes the conversion of 3'-phosphate to a 2',3'-cyclic phosphodiester at the end of RNA. The mechanism of action of the enzyme occurs in 3 steps: (A) adenylation of the enzyme by ATP; (B) transfer of adenylate to an RNA-N3'P to produce RNA-N3'PP5'A; (C) and attack of the adjacent 2'-hydroxyl on the 3'-phosphorus in the diester linkage to produce the cyclic end product. Likely functions in some aspects of cellular RNA processing. Function plays an important role in regulating axon regeneration by inhibiting central nervous system (CNS) axon regeneration following optic nerve injury. This chain is RNA 3'-terminal phosphate cyclase (RTCA), found in Macaca fascicularis (Crab-eating macaque).